A 438-amino-acid chain; its full sequence is Neutral metalloprotease ShpI (438 aa).

Residues Met-1–Ala-26 form the signal peptide. The propeptide occupies Asp-27–Lys-101. His-242 contributes to the Zn(2+) binding site. Glu-243 is an active-site residue. 2 residues coordinate Zn(2+): His-246 and Glu-269.

Belongs to the peptidase M30 family. Zn(2+) is required as a cofactor. Several different N-terminal ends may be produced, the favored N-terminus is position 102.

The protein resides in the secreted. With respect to regulation, inhibited by metal- and zinc-specific inhibitors, such as EDTA and 1,10-phenanthroline in vitro. Is resistant to all inhibitors of serine, cysteine and aspartic proteases. Protease that has a low substrate specificity. Catalyzes the hydrolysis of glucagon, melittin and oxidized beta-insulin at various positions in vitro. Is not able to cleave elastin or the synthetic substrates FAGLA (a substrate for neutral proteinases) and FALGPA (a substrate for collagenase). This chain is Neutral metalloprotease ShpI, found in Staphylococcus hyicus.